The sequence spans 298 residues: MFERDEHHFPVKRLLLLGALVGAGAYYLSREQNRKALDAKLAELGLKDAAQDVGSSVTKGWEKTKDAAQNAGSVIADKAQDVAGEVKSAVAGATAEIKDAGKEVADTAKDAGQNVGQNVKREAADLADQAKDKAQDVKADVSKAADQAKDKAQDVAQNVQAGAQQAAANVKDKVQDVKADASKAADQAKDKAQDVAQNVKQGAQQAASDAKDKVQDVKADASRAADQAKDKAQDVAQNVKQSAQDAKTDVDAKAKSWAFDLRTDAEAGKQGGQTGSTTNNAGTAGNTGMTGNTNTRKN.

3 LEA-like repeats span residues 48 to 117 (DAAQ…NVGQ), 128 to 197 (DQAK…DVAQ), and 201 to 270 (QGAQ…AGKQ). The segment covering 174-193 (VQDVKADASKAADQAKDKAQ) has biased composition (basic and acidic residues). The disordered stretch occupies residues 174-298 (VQDVKADASK…MTGNTNTRKN (125 aa)). Residues 194–208 (DVAQNVKQGAQQAAS) show a composition bias toward low complexity. A compositionally biased stretch (basic and acidic residues) spans 209-233 (DAKDKVQDVKADASRAADQAKDKAQ). The segment covering 275-298 (GSTTNNAGTAGNTGMTGNTNTRKN) has biased composition (low complexity).

Belongs to the LEA type 1 family.

The protein is Protein DR_1172 of Deinococcus radiodurans (strain ATCC 13939 / DSM 20539 / JCM 16871 / CCUG 27074 / LMG 4051 / NBRC 15346 / NCIMB 9279 / VKM B-1422 / R1).